The primary structure comprises 102 residues: Co-chaperonin GroES (102 aa).

This sequence belongs to the GroES chaperonin family. Heptamer of 7 subunits arranged in a ring. Interacts with the chaperonin GroEL.

The protein resides in the cytoplasm. In terms of biological role, together with the chaperonin GroEL, plays an essential role in assisting protein folding. The GroEL-GroES system forms a nano-cage that allows encapsulation of the non-native substrate proteins and provides a physical environment optimized to promote and accelerate protein folding. GroES binds to the apical surface of the GroEL ring, thereby capping the opening of the GroEL channel. In Vibrio harveyi (Beneckea harveyi), this protein is Co-chaperonin GroES.